The chain runs to 491 residues: DEAD-box ATP-dependent RNA helicase 36 (491 aa).

Residues 1–10 (MEEPTPEEEG) are compositionally biased toward acidic residues. The interval 1–56 (MEEPTPEEEGGITIMSKSRKNPKTVVNIQSQKLDSDQNTPQFEKFTNPNPSSDTTS) is disordered. Residues 24–56 (TVVNIQSQKLDSDQNTPQFEKFTNPNPSSDTTS) show a composition bias toward polar residues. Positions 58 to 86 (TNFEGLGLAEWAVETCKELGMRKPTPVQT) match the Q motif motif. In terms of domain architecture, Helicase ATP-binding spans 89–262 (VPKILAGRDV…EHSSNKAYFY (174 aa)). 102–109 (AQTGSGKT) is an ATP binding site. Residues 210 to 213 (DEAD) carry the DEAD box motif. Residues 289 to 438 (YLVHILSQME…NKKVITDSLE (150 aa)) enclose the Helicase C-terminal domain. Residues 471–491 (KTLADKGLLKKRGKRQKSTEN) are disordered. Residues 479–491 (LKKRGKRQKSTEN) are compositionally biased toward basic residues.

Belongs to the DEAD box helicase family. DDX49/DBP8 subfamily.

The enzyme catalyses ATP + H2O = ADP + phosphate + H(+). The protein is DEAD-box ATP-dependent RNA helicase 36 (RH36) of Arabidopsis thaliana (Mouse-ear cress).